Consider the following 255-residue polypeptide: MSSFKEFKIKWGMVIDLDKCTGCGACMVACQAENNIAPQPDASNKLKSLNWLVVYELNNGKPFPEHDVAYLPRPCMQCGKPSCVSVCPVVATDKNEEGGIVSQVYPRCIGCRYCMASCPYHARYFNWFDPTWPEGMDKTLTPDVSVRPRGVVEKCTFCHHRFMQAKDKARVEGRDPSALRDGDYVTSCTEACPNGAIIFGDFNNPEHRVHELHKSKYAFRLLERLGTDPQVYYLSRREWVRRLGDNYLEHEKVKG.

4Fe-4S ferredoxin-type domains are found at residues 11–41, 66–97, and 99–128; these read WGMV…PQPD, HDVA…KNEE, and GIVS…FNWF. Residues Cys20, Cys23, Cys26, Cys30, Cys75, Cys78, Cys83, Cys87, Cys108, Cys111, Cys114, and Cys118 each coordinate [4Fe-4S] cluster. Positions 155, 158, 188, and 192 each coordinate [3Fe-4S] cluster.

The Qrc complex is composed of four subunits: QrcA, QrcB, QrcC and QrcD. Can form a supercomplex with the [NiFe] hydrogenase HynA1 and the tetraheme Type I cytochrome c3 TpIc(3), its physiological electron donors. [4Fe-4S] cluster serves as cofactor. Requires [3Fe-4S] cluster as cofactor.

The protein localises to the periplasm. In terms of biological role, component of the respiratory Qrc complex, that catalyzes the reduction of the menaquinone pool using electrons transferred from the reduced periplasmic cytochrome c3, and which is probably involved in sulfate respiration. Is likely essential for growth on H(2) or formate since the periplasmic hydrogenases and/or formate dehydrogenases act as primary electron donors for the Qrc complex. QrcC is an electron-transferring subunit; its cubane iron sulfur clusters form a pathway for electron transfer between the hemes of QrcA and the membrane quinone pool. In Nitratidesulfovibrio vulgaris (strain ATCC 29579 / DSM 644 / CCUG 34227 / NCIMB 8303 / VKM B-1760 / Hildenborough) (Desulfovibrio vulgaris), this protein is Menaquinone reductase, iron-sulfur cluster-binding subunit.